We begin with the raw amino-acid sequence, 861 residues long: Leucine--tRNA ligase (861 aa).

Positions 42 to 52 match the 'HIGH' region motif; that stretch reads PYPSGRLHMGH. Residues 619-623 carry the 'KMSKS' region motif; sequence KMSKS. An ATP-binding site is contributed by Lys622.

It belongs to the class-I aminoacyl-tRNA synthetase family.

The protein localises to the cytoplasm. It catalyses the reaction tRNA(Leu) + L-leucine + ATP = L-leucyl-tRNA(Leu) + AMP + diphosphate. The chain is Leucine--tRNA ligase from Haemophilus influenzae (strain ATCC 51907 / DSM 11121 / KW20 / Rd).